Consider the following 605-residue polypeptide: Ubiquitin carboxyl-terminal hydrolase 2 (605 aa).

The segment at 1-200 (MSQLSSTLKR…CPEYLVDYLE (200 aa)) is necessary for interaction with MDM4. Disordered regions lie at residues 71–107 (LLDY…GSGL) and 237–264 (WETG…KSAQ). Residues 90-100 (KRAESQTRGTE) are compositionally biased toward basic and acidic residues. Residues 245–255 (PGPSRSSSPGR) show a composition bias toward low complexity. A USP domain is found at 267–599 (AGLRNLGNTC…DAYLLFYELA (333 aa)). Catalysis depends on cysteine 276, which acts as the Nucleophile. Residues 403–503 (YLEREDSRIG…FPKILVLHLK (101 aa)) form a necessary for interaction with MDM4 region. Zn(2+)-binding residues include cysteine 425, cysteine 428, cysteine 476, and cysteine 479. Histidine 557 functions as the Proton acceptor in the catalytic mechanism.

Belongs to the peptidase C19 family. USP2 subfamily. As to quaternary structure, homooligomer. Found in trimeric complex with MDM2 and MDM4 and USP2. Interacts with CCND1; the interaction is direct and promotes its stabilization by antagonizing ubiquitin-dependent degradation. Interacts (via N-terminus and C-terminus) with MDM2. Interacts with MDM4. Interacts with PER1. Interacts with KCNQ1; counteracts the NEDD4L-specific down-regulation of I(Ks) and restore plasma membrane localization of KCNQ1. Isoform 4: Interacts with NHERF4 and CLTC. In terms of tissue distribution, expressed in mesangial cells of the kidney and in different types of glomerulonephritides (at protein level).

It localises to the cytoplasm. It is found in the perinuclear region. Its subcellular location is the nucleus. The protein resides in the membrane. The enzyme catalyses Thiol-dependent hydrolysis of ester, thioester, amide, peptide and isopeptide bonds formed by the C-terminal Gly of ubiquitin (a 76-residue protein attached to proteins as an intracellular targeting signal).. Cleavage is inhibited by ubiquitin in a dosage-dependent manner. Cleavage is blocked by ubiquitin aldehyde. Its function is as follows. Hydrolase that deubiquitinates polyubiquitinated target proteins such as MDM2, MDM4 and CCND1. Isoform 1 and isoform 4 possess both ubiquitin-specific peptidase and isopeptidase activities. Deubiquitinates MDM2 without reversing MDM2-mediated p53/TP53 ubiquitination and thus indirectly promotes p53/TP53 degradation and limits p53 activity. Has no deubiquitinase activity against p53/TP53. Prevents MDM2-mediated degradation of MDM4. Plays a role in the G1/S cell-cycle progression in normal and cancer cells. Regulates the circadian clock by modulating its intrinsic circadian rhythm and its capacity to respond to external cues. Associates with clock proteins and deubiquitinates core clock component PER1 but does not affect its overall stability. Regulates the nucleocytoplasmic shuttling and nuclear retention of PER1 and its repressive role on the clock transcription factors CLOCK and BMAL1. Plays a role in the regulation of myogenic differentiation of embryonic muscle cells. Circadian clock output effector that regulates Ca(2+) absorption in the small intestine. Probably functions by regulating protein levels of the membrane scaffold protein NHERF4 in a rhythmic manner, and is therefore likely to control Ca(2+) membrane permeability mediated by the Ca(2+) channel TRPV6 in the intestine. This chain is Ubiquitin carboxyl-terminal hydrolase 2 (USP2), found in Homo sapiens (Human).